A 123-amino-acid chain; its full sequence is Venom protein 29 (123 aa).

An N-terminal signal peptide occupies residues 1 to 18 (MNKLFLFTLLVTLWSVKG).

Post-translationally, contains 3 disulfide bonds. In terms of tissue distribution, expressed by the venom gland.

The protein resides in the secreted. In Lychas mucronatus (Chinese swimming scorpion), this protein is Venom protein 29.